The sequence spans 464 residues: GPI mannosyltransferase 2 (464 aa).

Residues 1–70 (MYYIGHPSYY…MTRSGYNYFK (70 aa)) lie on the Cytoplasmic side of the membrane. The chain crosses the membrane as a helical span at residues 71–91 (GICVCTFLLSTILYLGIAVIM). Topologically, residues 92-166 (SHLCVFDDTA…ISFLAFRSKD (75 aa)) are lumenal. Residues Asn108 and Asn139 are each glycosylated (N-linked (GlcNAc...) asparagine). Residues 167-187 (VVLLGIVSCFASIFFHAIACY) traverse the membrane as a helical segment. The Cytoplasmic portion of the chain corresponds to 188–219 (ALYLLTKSIFSNQKMTAYTVIFYCFSPSGIYM). The helical transmembrane segment at 220–240 (SVGYTESLFAAFSFLGLLLFI) threads the bilayer. Residues 241–260 (KKQQYPAAFLWSLATLIRSN) lie on the Lumenal side of the membrane. The chain crosses the membrane as a helical span at residues 261-281 (GIFWCIFFGMPAIGTLKISLE). Topologically, residues 282 to 289 (RLQLTFMQ) are cytoplasmic. A helical transmembrane segment spans residues 290–309 (VSQLVGYGTKCLIILVPFFY). At 310 to 356 (NQYLGFKLFCPGVAWCNKSLPLIYPAVQEKYWNVGFLRYWTLNNIPN) the chain is on the lumenal side. Residue Asn326 is glycosylated (N-linked (GlcNAc...) asparagine). Residues 357–377 (FLFALLSIIPILFALFYSISG) form a helical membrane-spanning segment. At 378-388 (STLHSFRSIKS) the chain is on the cytoplasmic side. A helical membrane pass occupies residues 389-409 (HLVLSALYLYIGCFHMHTQVL). The Lumenal segment spans residues 410-440 (NRMSSALPLLYWSMAHATLYAKSRNLKAFGH). The chain crosses the membrane as a helical span at residues 441–461 (CILFVWIVYTVIQAGLYGSFL). Residues 462–464 (PPA) are Cytoplasmic-facing.

Belongs to the PIGV family. As to quaternary structure, part of the GPI mannosyltransferase 2 complex composed of gpi18 and C167.09.

The protein resides in the endoplasmic reticulum membrane. It functions in the pathway glycolipid biosynthesis; glycosylphosphatidylinositol-anchor biosynthesis. Mannosyltransferase involved in glycosylphosphatidylinositol-anchor biosynthesis. Responsible for the transfer of the second mannose to the glycosylphosphatidylinositol during GPI precursor assembly. This is GPI mannosyltransferase 2 (gpi18) from Schizosaccharomyces pombe (strain 972 / ATCC 24843) (Fission yeast).